A 102-amino-acid chain; its full sequence is Small ribosomal subunit protein uS10 (102 aa).

Belongs to the universal ribosomal protein uS10 family. As to quaternary structure, part of the 30S ribosomal subunit.

Involved in the binding of tRNA to the ribosomes. The sequence is that of Small ribosomal subunit protein uS10 from Streptococcus thermophilus (strain CNRZ 1066).